The primary structure comprises 172 residues: Large ribosomal subunit protein uL10 (172 aa).

This sequence belongs to the universal ribosomal protein uL10 family. In terms of assembly, part of the ribosomal stalk of the 50S ribosomal subunit. The N-terminus interacts with L11 and the large rRNA to form the base of the stalk. The C-terminus forms an elongated spine to which L12 dimers bind in a sequential fashion forming a multimeric L10(L12)X complex.

Functionally, forms part of the ribosomal stalk, playing a central role in the interaction of the ribosome with GTP-bound translation factors. In Chlorobium phaeovibrioides (strain DSM 265 / 1930) (Prosthecochloris vibrioformis (strain DSM 265)), this protein is Large ribosomal subunit protein uL10.